Reading from the N-terminus, the 222-residue chain is Ribose-5-phosphate isomerase A (222 aa).

Substrate-binding positions include 28 to 31 (TGST), 81 to 84 (DGAD), and 94 to 97 (KGGG). Glu103 serves as the catalytic Proton acceptor. Residue Lys121 participates in substrate binding.

It belongs to the ribose 5-phosphate isomerase family. In terms of assembly, homodimer.

The enzyme catalyses aldehydo-D-ribose 5-phosphate = D-ribulose 5-phosphate. Its pathway is carbohydrate degradation; pentose phosphate pathway; D-ribose 5-phosphate from D-ribulose 5-phosphate (non-oxidative stage): step 1/1. Catalyzes the reversible conversion of ribose-5-phosphate to ribulose 5-phosphate. This is Ribose-5-phosphate isomerase A from Azoarcus sp. (strain BH72).